A 540-amino-acid chain; its full sequence is 2,3-bisphosphoglycerate-independent phosphoglycerate mutase (540 aa).

2 residues coordinate Mn(2+): aspartate 24 and serine 74. The Phosphoserine intermediate role is filled by serine 74. Residues histidine 135, 165–166 (RD), arginine 197, arginine 203, 268–271 (RPDR), and lysine 341 each bind substrate. Mn(2+)-binding residues include aspartate 408, histidine 412, aspartate 449, histidine 450, and histidine 467.

This sequence belongs to the BPG-independent phosphoglycerate mutase family. In terms of assembly, monomer. Mn(2+) is required as a cofactor.

The catalysed reaction is (2R)-2-phosphoglycerate = (2R)-3-phosphoglycerate. It participates in carbohydrate degradation; glycolysis; pyruvate from D-glyceraldehyde 3-phosphate: step 3/5. In terms of biological role, catalyzes the interconversion of 2-phosphoglycerate and 3-phosphoglycerate. This chain is 2,3-bisphosphoglycerate-independent phosphoglycerate mutase, found in Prochlorococcus marinus (strain SARG / CCMP1375 / SS120).